Consider the following 500-residue polypeptide: Nitrate/nitrite transporter NrtP (500 aa).

12 helical membrane passes run 19-39 (WFAF…ATTI), 52-72 (TLGI…GMLL), 79-99 (ITYS…ALAQ), 109-129 (LLMG…AEWF), 147-167 (FGAF…SFFS), 175-195 (LAIA…YNTV), 220-240 (SFWA…LLAW), 247-267 (IHFL…GLFA), 364-384 (WTMT…HFIN), 389-409 (IPVA…GCGA), 425-445 (IAGN…TIFS), and 451-471 (TLFS…AFFL).

Belongs to the major facilitator superfamily. Nitrate/nitrite porter (TC 2.A.1.8) family.

The protein resides in the cell inner membrane. Transport system for both nitrate and nitrite, with much higher affinity for nitrate than for nitrite. The sequence is that of Nitrate/nitrite transporter NrtP from Nostoc punctiforme (strain ATCC 29133 / PCC 73102).